Consider the following 151-residue polypeptide: Large ribosomal subunit protein bL9 (151 aa).

The protein belongs to the bacterial ribosomal protein bL9 family.

Binds to the 23S rRNA. This is Large ribosomal subunit protein bL9 from Chlorobium luteolum (strain DSM 273 / BCRC 81028 / 2530) (Pelodictyon luteolum).